The primary structure comprises 151 residues: UPF0178 protein Ping_0754 (151 aa).

This sequence belongs to the UPF0178 family.

The chain is UPF0178 protein Ping_0754 from Psychromonas ingrahamii (strain DSM 17664 / CCUG 51855 / 37).